Consider the following 83-residue polypeptide: Putative regulatory protein FMG_0656 (83 aa).

Belongs to the RemA family.

The sequence is that of Putative regulatory protein FMG_0656 from Finegoldia magna (strain ATCC 29328 / DSM 20472 / WAL 2508) (Peptostreptococcus magnus).